The primary structure comprises 271 residues: MLKIGVFGCGAIGTELCKAIDSGHIEVELYAVYDRHEQSIINLKEQLKNTDPKVLEIVEMVKHVDLVVECASQQAVYDVVPTTLHAKCDVMVISVGAFADKKLLDTTFDIAKEYGCKIYFPSGAIVGLDGLKSASAASIYSVTLTTQKHPRSFEGAPYIVQNNIDLDSIKGKTVLFEGMASEAVKAFPSNVNVAASLSIAGIGFDKTKVKIIANPALTRNIHEITVEGEFGMFTTRVENVPAPSNPKTSYLAALSAISTLKKIADPLQVGT.

The NAD(+) site is built by Ala124 and Asn192. Residue His222 is part of the active site.

This sequence belongs to the L-aspartate dehydrogenase family.

It catalyses the reaction L-aspartate + NADP(+) + H2O = oxaloacetate + NH4(+) + NADPH + H(+). It carries out the reaction L-aspartate + NAD(+) + H2O = oxaloacetate + NH4(+) + NADH + H(+). It participates in cofactor biosynthesis; NAD(+) biosynthesis; iminoaspartate from L-aspartate (dehydrogenase route): step 1/1. Specifically catalyzes the NAD or NADP-dependent dehydrogenation of L-aspartate to iminoaspartate. The protein is L-aspartate dehydrogenase of Methanococcoides burtonii (strain DSM 6242 / NBRC 107633 / OCM 468 / ACE-M).